The primary structure comprises 192 residues: Endoribonuclease YbeY (192 aa).

Zn(2+)-binding residues include histidine 109, histidine 113, and histidine 119. Residues valine 142–arginine 192 are disordered. Low complexity predominate over residues threonine 159–glycine 180.

It belongs to the endoribonuclease YbeY family. Zn(2+) is required as a cofactor.

It localises to the cytoplasm. Single strand-specific metallo-endoribonuclease involved in late-stage 70S ribosome quality control and in maturation of the 3' terminus of the 16S rRNA. This Anaeromyxobacter sp. (strain Fw109-5) protein is Endoribonuclease YbeY.